We begin with the raw amino-acid sequence, 176 residues long: ATP-dependent protease subunit HslV (176 aa).

Residue threonine 5 is part of the active site. Na(+) is bound by residues serine 161, cysteine 164, and threonine 167.

It belongs to the peptidase T1B family. HslV subfamily. A double ring-shaped homohexamer of HslV is capped on each side by a ring-shaped HslU homohexamer. The assembly of the HslU/HslV complex is dependent on binding of ATP.

Its subcellular location is the cytoplasm. It carries out the reaction ATP-dependent cleavage of peptide bonds with broad specificity.. Its activity is regulated as follows. Allosterically activated by HslU binding. Its function is as follows. Protease subunit of a proteasome-like degradation complex believed to be a general protein degrading machinery. The sequence is that of ATP-dependent protease subunit HslV from Desulfitobacterium hafniense (strain DSM 10664 / DCB-2).